The chain runs to 275 residues: MGQKVNPHGFRLGITTDFKSRWYADKLYKDYVKEDVAIRRMMTSGMERAGISKVEIERTRDRVRVDIHTARPGIVIGRRGAEADRIRGDLEKLTGKQVQLNILEVKNPETDAQLVAQAVAEQLSSRVSFRRAMRKSMQSAMKAGAKGIKIQCGGRLGGAEMSRSEFYREGRVPLHTLRANVDYGFFEAKTTFGRIGVKVWIYKGDVKNIAEVRAENAAARAGNRPARGGADRPARGGRGGERGGRGRKPQQAPAAEAPKAEAPAAAPAESTGTEA.

The 69-residue stretch at 38-106 folds into the KH type-2 domain; the sequence is IRRMMTSGME…QVQLNILEVK (69 aa). Low complexity predominate over residues 216–228; the sequence is NAAARAGNRPARG. Residues 216 to 275 are disordered; it reads NAAARAGNRPARGGADRPARGGRGGERGGRGRKPQQAPAAEAPKAEAPAAAPAESTGTEA. Basic and acidic residues predominate over residues 229–244; sequence GADRPARGGRGGERGG. A compositionally biased stretch (low complexity) spans 249-268; that stretch reads PQQAPAAEAPKAEAPAAAPA.

Belongs to the universal ribosomal protein uS3 family. In terms of assembly, part of the 30S ribosomal subunit. Forms a tight complex with proteins S10 and S14.

Binds the lower part of the 30S subunit head. Binds mRNA in the 70S ribosome, positioning it for translation. This Streptomyces avermitilis (strain ATCC 31267 / DSM 46492 / JCM 5070 / NBRC 14893 / NCIMB 12804 / NRRL 8165 / MA-4680) protein is Small ribosomal subunit protein uS3.